Consider the following 449-residue polypeptide: MGKINFDYSKATEFFCQNEIDVMQPYVDVAHDMLHNKTGLGNTFLGWIDLPKNYDKEEFDRIKKSAEKIKSDSDVLLVIGIGGSYLGSRAAIDMVSHSFRNGLKKEQRKAPEVYFVGHNISSTYIMDLLDIIEGKDISVNVISKSGTTTEPALAFRIFKDYLEKKYGKEEARKRIYATTDASKGALRQLATEEGYETFVIPDDVGGRFSVLTAVGLLPIAAAGLDIDAMMKGANDAREAFQNPDLKSNDSYRYAVARTILHRKGKDVELLVNYEPQLHYVSEWWKQLYGESEGKENKGLFPASVDFSTDLHSMGQYIQDGKRLLFETVLNVENCKRNITISSEEVDLDGLNYLAGKTVDFVNHKAFEGTLLAHTDGKVPNLVINIPQLDEYNFGYLVYFFEKACGISGYLLGVNPFDQPGVEAYKKNMFALLGKPGYEKEKEELEKRLK.

The active-site Proton donor is the glutamate 290. Active-site residues include histidine 311 and lysine 425.

This sequence belongs to the GPI family.

The protein resides in the cytoplasm. The enzyme catalyses alpha-D-glucose 6-phosphate = beta-D-fructose 6-phosphate. It participates in carbohydrate biosynthesis; gluconeogenesis. The protein operates within carbohydrate degradation; glycolysis; D-glyceraldehyde 3-phosphate and glycerone phosphate from D-glucose: step 2/4. In terms of biological role, catalyzes the reversible isomerization of glucose-6-phosphate to fructose-6-phosphate. This Clostridioides difficile (strain 630) (Peptoclostridium difficile) protein is Glucose-6-phosphate isomerase.